A 122-amino-acid chain; its full sequence is Large ribosomal subunit protein uL14 (122 aa).

The protein belongs to the universal ribosomal protein uL14 family. Part of the 50S ribosomal subunit. Forms a cluster with proteins L3 and L19. In the 70S ribosome, L14 and L19 interact and together make contacts with the 16S rRNA in bridges B5 and B8.

Its function is as follows. Binds to 23S rRNA. Forms part of two intersubunit bridges in the 70S ribosome. This chain is Large ribosomal subunit protein uL14, found in Rhizobium etli (strain CIAT 652).